The following is a 411-amino-acid chain: F-box protein At4g19940 (411 aa).

In terms of domain architecture, F-box spans 29–75; sequence RQPIPEIPFDLVIEILTRLPAKSLMRFKSVSKLWSSLICSRNFTNRL.

The chain is F-box protein At4g19940 from Arabidopsis thaliana (Mouse-ear cress).